A 295-amino-acid polypeptide reads, in one-letter code: Glycine--tRNA ligase alpha subunit (295 aa).

The protein belongs to the class-II aminoacyl-tRNA synthetase family. In terms of assembly, tetramer of two alpha and two beta subunits.

The protein localises to the cytoplasm. The enzyme catalyses tRNA(Gly) + glycine + ATP = glycyl-tRNA(Gly) + AMP + diphosphate. The sequence is that of Glycine--tRNA ligase alpha subunit from Shouchella clausii (strain KSM-K16) (Alkalihalobacillus clausii).